A 255-amino-acid chain; its full sequence is tRNA1(Val) (adenine(37)-N6)-methyltransferase (255 aa).

The protein belongs to the methyltransferase superfamily. tRNA (adenine-N(6)-)-methyltransferase family.

Its subcellular location is the cytoplasm. It carries out the reaction adenosine(37) in tRNA1(Val) + S-adenosyl-L-methionine = N(6)-methyladenosine(37) in tRNA1(Val) + S-adenosyl-L-homocysteine + H(+). Specifically methylates the adenine in position 37 of tRNA(1)(Val) (anticodon cmo5UAC). The polypeptide is tRNA1(Val) (adenine(37)-N6)-methyltransferase (Porphyromonas gingivalis (strain ATCC BAA-308 / W83)).